A 238-amino-acid chain; its full sequence is Orotidine 5'-phosphate decarboxylase (238 aa).

Substrate contacts are provided by residues Asp18, Lys40, 67–76 (DMKLLDIDNT), Thr122, Arg183, Gln192, and Arg213. The active-site Proton donor is Lys69.

It belongs to the OMP decarboxylase family. Type 1 subfamily. Homodimer.

It carries out the reaction orotidine 5'-phosphate + H(+) = UMP + CO2. Its pathway is pyrimidine metabolism; UMP biosynthesis via de novo pathway; UMP from orotate: step 2/2. Catalyzes the decarboxylation of orotidine 5'-monophosphate (OMP) to uridine 5'-monophosphate (UMP). The polypeptide is Orotidine 5'-phosphate decarboxylase (Brucella abortus (strain S19)).